The chain runs to 119 residues: Ribonuclease P protein component (119 aa).

This sequence belongs to the RnpA family. Consists of a catalytic RNA component (M1 or rnpB) and a protein subunit.

It catalyses the reaction Endonucleolytic cleavage of RNA, removing 5'-extranucleotides from tRNA precursor.. In terms of biological role, RNaseP catalyzes the removal of the 5'-leader sequence from pre-tRNA to produce the mature 5'-terminus. It can also cleave other RNA substrates such as 4.5S RNA. The protein component plays an auxiliary but essential role in vivo by binding to the 5'-leader sequence and broadening the substrate specificity of the ribozyme. The chain is Ribonuclease P protein component from Listeria monocytogenes serotype 4b (strain CLIP80459).